The sequence spans 229 residues: Ion-translocating oxidoreductase complex subunit E (229 aa).

5 helical membrane-spanning segments follow: residues 58 to 78 (LGLG…ISLF), 82 to 102 (IPHD…VTTI), 105 to 125 (LMNA…PLIV), 147 to 167 (AFDG…LGAI), and 201 to 221 (GLLL…ILAV).

The protein belongs to the NqrDE/RnfAE family. As to quaternary structure, the complex is composed of six subunits: RnfA, RnfB, RnfC, RnfD, RnfE and RnfG.

Its subcellular location is the cell inner membrane. Part of a membrane-bound complex that couples electron transfer with translocation of ions across the membrane. The polypeptide is Ion-translocating oxidoreductase complex subunit E (Glaesserella parasuis serovar 5 (strain SH0165) (Haemophilus parasuis)).